We begin with the raw amino-acid sequence, 362 residues long: Outer membrane porin F (362 aa).

The first 22 residues, 1 to 22 (MMKRNILAVIVPALLVAGTANA), serve as a signal peptide directing secretion. The beta stranded transmembrane segment at 23-28 (AEIYNK) threads the bilayer. A topological domain (periplasmic) is located at residue D29. The chain crosses the membrane as a beta stranded span at residues 30 to 45 (GNKVDLYGKAVGLHYF). At 46 to 60 (SKGNGENSYGGNGDM) the chain is on the extracellular side. Residues 61–73 (TYARLGFKGETQI) traverse the membrane as a beta stranded segment. Residues 74–75 (NS) are Periplasmic-facing. The chain crosses the membrane as a beta stranded span at residues 76–88 (DLTGYGQWEYNFQ). The Extracellular segment spans residues 89–104 (GNNSEGADAQTGNKTR). The chain crosses the membrane as a beta stranded span at residues 105–113 (LAFAGLKYA). The Periplasmic segment spans residues 114 to 115 (DV). A beta stranded transmembrane segment spans residues 116 to 122 (GSFDYGR). Residues 123–156 (NYGVVYDALGYTDMLPEFGGDTAYSDDFFVGRVG) are Extracellular-facing. Residues 157–163 (GVATYRN) traverse the membrane as a beta stranded segment. Over 164–171 (SNFFGLVD) the chain is Periplasmic. The beta stranded transmembrane segment at 172–181 (GLNFAVQYLG) threads the bilayer. The Extracellular segment spans residues 182–193 (KNERDTARRSNG). Residues 194–204 (DGVGGSISYEY) traverse the membrane as a beta stranded segment. Position 205 (E205) is a topological domain, periplasmic. Residues 206–217 (GFGIVGAYGAAD) traverse the membrane as a beta stranded segment. Over 218–232 (RTNLQEAQPLGNGKK) the chain is Extracellular. A beta stranded transmembrane segment spans residues 233–244 (AEQWATGLKYDA). Position 245 (N245) is a topological domain, periplasmic. The chain crosses the membrane as a beta stranded span at residues 246-257 (NIYLAANYGETR). Over 258–274 (NATPITNKFTNTSGFAN) the chain is Extracellular. The chain crosses the membrane as a beta stranded span at residues 275 to 287 (KTQDVLLVAQYQF). Over 288-289 (DF) the chain is Periplasmic. Residues 290 to 303 (GLRPSIAYTKSKAK) traverse the membrane as a beta stranded segment. Residues 304 to 313 (DVEGIGDVDL) are Extracellular-facing. Residues 314-325 (VNYFEVGATYYF) traverse the membrane as a beta stranded segment. The Periplasmic segment spans residues 326–327 (NK). Residues 328-337 (NMSTYVDYII) form a beta stranded membrane-spanning segment. Residues 338-352 (NQIDSDNKLGVGSDD) are Extracellular-facing. The beta stranded transmembrane segment at 353 to 362 (TVAVGIVYQF) threads the bilayer.

The protein belongs to the Gram-negative porin family. As to quaternary structure, homotrimer. Forms mixed heterotrimers with OmpC and with PhoE; other mixed heterotrimers are also probable. In terms of assembly, (Microbial infection) Trimeric complexes with colicin E3, BtuB and OmpF can be cross-linked and immunoprecipitated.

It localises to the cell outer membrane. Its function is as follows. Forms pores that allow passive diffusion of small molecules across the outer membrane. In terms of biological role, (Microbial infection) It is also a receptor for the bacteriophage T2. Is the major receptor for colicin E5. Functionally, (Microbial infection) Probably translocates colicin E3 (and other A-type colicins) across the outer membrane. (Microbial infection) A mixed OmpC-OmpF heterotrimer is the outer membrane receptor for toxin CdiA-EC536 (ECL_04451); polymorphisms in extracellular loops 4 and 5 of OmpC confer susceptibility to CdiA-EC536-mediated toxicity. The chain is Outer membrane porin F (ompF) from Escherichia coli (strain K12).